Here is a 357-residue protein sequence, read N- to C-terminus: MKPSQKQTQRQPHFSKDSAKKRDFSAKNDRRSVSRTARIETANTKKSAVNSDNKFLSKPKAKPVVRASNQPKAEGEKLQKVLARAGQGSRREIETMIAAGRVSVEGKIATLGDRIDVHSGVKVRIDGQIINLSHTQKEICRVLMYYKPEGELCTRSDPEGRATVFDRLPRLTGSRWIAVGRLDINTSGLLLFTTDGELANRLMHPSREVEREYSVRVFGQVDDAMLARLRKGVQLEDGLANFKEIKFTGGVGINQWYDVTLMEGRNREVRRLWESQGIQVSRLIRIRYGNIKLMKGLPRGGWEEMDLENVNYLRELVGLPAETETKLDVKQASRRPKSGQIRKAVKRYSEMNKRYKK.

Polar residues predominate over residues 1–12 (MKPSQKQTQRQP). The tract at residues 1–76 (MKPSQKQTQR…ASNQPKAEGE (76 aa)) is disordered. Residues 14 to 32 (FSKDSAKKRDFSAKNDRRS) are compositionally biased toward basic and acidic residues. Positions 41–54 (TANTKKSAVNSDNK) are enriched in polar residues. An S4 RNA-binding domain is found at 76–148 (EKLQKVLARA…ICRVLMYYKP (73 aa)). Catalysis depends on aspartate 183, which acts as the Nucleophile.

It belongs to the pseudouridine synthase RsuA family.

It catalyses the reaction uridine(2605) in 23S rRNA = pseudouridine(2605) in 23S rRNA. Functionally, responsible for synthesis of pseudouridine from uracil-2605 in 23S ribosomal RNA. The protein is Ribosomal large subunit pseudouridine synthase B (rluB) of Haemophilus influenzae (strain ATCC 51907 / DSM 11121 / KW20 / Rd).